Reading from the N-terminus, the 1123-residue chain is Adenylyl cyclase X E (1123 aa).

The Cytoplasmic segment spans residues 1 to 47; the sequence is MPRSLGNCQLNYSKERMWEPGYLKAKCAELRLESEFRLYRIRLWKSY. A helical transmembrane segment spans residues 48 to 68; that stretch reads LLTFFMLHIFVTSVHCALLLA. The Extracellular segment spans residues 69 to 73; the sequence is TIERR. Residues 74–94 traverse the membrane as a helical segment; it reads SIIYFDVALSIGCALVLILVL. At 95–106 the chain is on the cytoplasmic side; the sequence is SVNFCDEFIAKH. The chain crosses the membrane as a helical span at residues 107–127; it reads TWYMYASSIFASLTLVFADLT. Topologically, residues 128-137 are extracellular; the sequence is ESIYHTYAHS. The chain crosses the membrane as a helical span at residues 138-158; it reads WILGTFYDTYIIYMIYMFLPI. Residues 159–163 lie on the Cytoplasmic side of the membrane; it reads HFISG. A helical membrane pass occupies residues 164-184; the sequence is AVLLALLVSGLYILYFVIFIA. The Extracellular segment spans residues 185–196; sequence QGFAQFASALFS. The chain crosses the membrane as a helical span at residues 197 to 217; that stretch reads VGGMSVDIVHYLCLNLVGIFY. Residues 218–581 lie on the Cytoplasmic side of the membrane; that stretch reads RVMNDTVVRS…YLKQTDYMYK (364 aa). Residues 346 to 348 and Arg392 each bind ATP; that span reads LGD. Asp348 contacts Mg(2+). Residues 582–602 traverse the membrane as a helical segment; that stretch reads YSIILSASVGCSLVYIELMDT. Residues 603–608 lie on the Extracellular side of the membrane; sequence QMICSS. A helical membrane pass occupies residues 609–629; it reads CFVLPASVATIQCILALIAWY. The Cytoplasmic portion of the chain corresponds to 630-667; it reads KKYCWTRYGRNNVPHHYNGFSCFIFRIHDKILNSLPIR. Residues 668–688 form a helical membrane-spanning segment; the sequence is ICIYLFLMISSFFVMCLIVMS. Residues 689–719 are Extracellular-facing; the sequence is CQREEFEMAYIEERLFHYEQEAHICFHPWVT. Residues 720–740 form a helical membrane-spanning segment; the sequence is TNMLSLMICLTFTFAHIPIMV. Residues 741–743 lie on the Cytoplasmic side of the membrane; it reads KTA. A helical membrane pass occupies residues 744 to 764; the sequence is VAILETLAYLLLIFFQFDFVF. Topologically, residues 765–772 are extracellular; it reads HHSVTTNP. The helical transmembrane segment at 773–793 threads the bilayer; sequence YFKSEYAHALLICITFLIMFV. At 794-1123 the chain is on the cytoplasmic side; that stretch reads KERQIEFTNK…STSRHTLQSL (330 aa). Residues Lys903, 1014-1016, 1021-1025, and Lys1061 each bind ATP; these read DIW and NMASR.

The protein belongs to the adenylyl cyclase class-4/guanylyl cyclase family. As to expression, expressed in labella.

The protein localises to the membrane. It catalyses the reaction ATP = 3',5'-cyclic AMP + diphosphate. Catalyzes the formation of the signaling molecule cAMP in response to G-protein signaling. The protein is Adenylyl cyclase X E of Drosophila melanogaster (Fruit fly).